We begin with the raw amino-acid sequence, 194 residues long: MSPFSIVLIGFAMSTDAFAAAIGKGAAMRKPQWRDALRAGLIFGCIEAITPVIGWVLGRAASSYLSAYDHWIAFVLLGALGTHMMIAGLRNGPDDANDAEAKTPKRHGLLGLATTGFATSIDAMAVGVSLAFLDVHIGVVAVVVGLCTFSMVTAGVMLGRALGNLIGKRAEILGGLILVIVGSVILYEHLGAAT.

The next 6 membrane-spanning stretches (helical) occupy residues 3–23 (PFSIVLIGFAMSTDAFAAAIG), 37–57 (LRAGLIFGCIEAITPVIGWVL), 69–89 (DHWIAFVLLGALGTHMMIAGL), 110–132 (LGLATTGFATSIDAMAVGVSLAF), 147–167 (CTFSMVTAGVMLGRALGNLIG), and 172–192 (ILGGLILVIVGSVILYEHLGA).

Belongs to the MntP (TC 9.B.29) family.

The protein resides in the cell inner membrane. Functionally, probably functions as a manganese efflux pump. This chain is Putative manganese efflux pump MntP, found in Xanthomonas oryzae pv. oryzae (strain MAFF 311018).